Here is a 217-residue protein sequence, read N- to C-terminus: Probable transaldolase (217 aa).

Catalysis depends on Lys83, which acts as the Schiff-base intermediate with substrate.

It belongs to the transaldolase family. Type 3B subfamily.

Its subcellular location is the cytoplasm. It catalyses the reaction D-sedoheptulose 7-phosphate + D-glyceraldehyde 3-phosphate = D-erythrose 4-phosphate + beta-D-fructose 6-phosphate. The protein operates within carbohydrate degradation; pentose phosphate pathway; D-glyceraldehyde 3-phosphate and beta-D-fructose 6-phosphate from D-ribose 5-phosphate and D-xylulose 5-phosphate (non-oxidative stage): step 2/3. Functionally, transaldolase is important for the balance of metabolites in the pentose-phosphate pathway. In Ruegeria sp. (strain TM1040) (Silicibacter sp.), this protein is Probable transaldolase.